We begin with the raw amino-acid sequence, 485 residues long: Glutamyl-tRNA(Gln) amidotransferase subunit A (485 aa).

Residues lysine 79 and serine 154 each act as charge relay system in the active site. Serine 178 serves as the catalytic Acyl-ester intermediate.

Belongs to the amidase family. GatA subfamily. In terms of assembly, heterotrimer of A, B and C subunits.

The catalysed reaction is L-glutamyl-tRNA(Gln) + L-glutamine + ATP + H2O = L-glutaminyl-tRNA(Gln) + L-glutamate + ADP + phosphate + H(+). Functionally, allows the formation of correctly charged Gln-tRNA(Gln) through the transamidation of misacylated Glu-tRNA(Gln) in organisms which lack glutaminyl-tRNA synthetase. The reaction takes place in the presence of glutamine and ATP through an activated gamma-phospho-Glu-tRNA(Gln). This Staphylococcus aureus (strain bovine RF122 / ET3-1) protein is Glutamyl-tRNA(Gln) amidotransferase subunit A.